A 101-amino-acid chain; its full sequence is Small ribosomal subunit protein bS16 (101 aa).

The protein belongs to the bacterial ribosomal protein bS16 family.

The sequence is that of Small ribosomal subunit protein bS16 from Ureaplasma parvum serovar 3 (strain ATCC 700970).